A 102-amino-acid chain; its full sequence is Small ribosomal subunit protein uS10 (102 aa).

It belongs to the universal ribosomal protein uS10 family. In terms of assembly, part of the 30S ribosomal subunit.

In terms of biological role, involved in the binding of tRNA to the ribosomes. The sequence is that of Small ribosomal subunit protein uS10 from Caulobacter sp. (strain K31).